Here is a 236-residue protein sequence, read N- to C-terminus: Sorulation-regulated protein 2 (236 aa).

A signal peptide spans Met1–Ala20. N-linked (GlcNAc...) asparagine glycans are attached at residues Asn155, Asn160, Asn203, and Asn212. Residue Asn212 is the site of GPI-anchor amidated asparagine attachment. Positions Ser213 to Pro236 are cleaved as a propeptide — removed in mature form.

Post-translationally, the GPI-anchor is attached to the protein in the endoplasmic reticulum and serves to target the protein to the cell surface. There, the glucosamine-inositol phospholipid moiety is cleaved off and the GPI-modified mannoprotein is covalently attached via its lipidless GPI glycan remnant to the 1,6-beta-glucan of the outer cell wall layer. In terms of processing, N-glycosylated.

It is found in the spore wall. The protein localises to the secreted. Its subcellular location is the cell wall. It localises to the membrane. The polypeptide is Sorulation-regulated protein 2 (Saccharomyces cerevisiae (strain ATCC 204508 / S288c) (Baker's yeast)).